The chain runs to 174 residues: MTQPLFLIGPRGCGKTTVGMALADSLNRRFVDTDQWLQSQLNMTVADIVEREEWAGFRARETAALEAVTAPSTVIATGGGIILTEFNRHFMQNNGIVVYLCAPVSVLVNRLQAAPEEDLRPTLTGKPLSEEVQEVLEERDALYREVAHIIIDATNEPSQVISEIRSALAQTINC.

12 to 17 (GCGKTT) serves as a coordination point for ATP. T16 and D32 together coordinate Mg(2+). 3 residues coordinate substrate: D34, R58, and G79. The segment at 112-126 (QAAPEEDLRPTLTGK) is LID domain. R120 is a binding site for ATP. R139 serves as a coordination point for substrate.

Belongs to the shikimate kinase family. AroL subfamily. In terms of assembly, monomer. The cofactor is Mg(2+).

It is found in the cytoplasm. It carries out the reaction shikimate + ATP = 3-phosphoshikimate + ADP + H(+). Its pathway is metabolic intermediate biosynthesis; chorismate biosynthesis; chorismate from D-erythrose 4-phosphate and phosphoenolpyruvate: step 5/7. Catalyzes the specific phosphorylation of the 3-hydroxyl group of shikimic acid using ATP as a cosubstrate. The polypeptide is Shikimate kinase 2 (Escherichia coli O81 (strain ED1a)).